Here is an 88-residue protein sequence, read N- to C-terminus: Small ribosomal subunit protein uS15 (88 aa).

It belongs to the universal ribosomal protein uS15 family. In terms of assembly, part of the 30S ribosomal subunit. Forms a bridge to the 50S subunit in the 70S ribosome, contacting the 23S rRNA.

One of the primary rRNA binding proteins, it binds directly to 16S rRNA where it helps nucleate assembly of the platform of the 30S subunit by binding and bridging several RNA helices of the 16S rRNA. Its function is as follows. Forms an intersubunit bridge (bridge B4) with the 23S rRNA of the 50S subunit in the ribosome. In Thermoanaerobacter pseudethanolicus (strain ATCC 33223 / 39E) (Clostridium thermohydrosulfuricum), this protein is Small ribosomal subunit protein uS15.